A 231-amino-acid chain; its full sequence is Transcriptional regulatory protein KdpE (231 aa).

A Response regulatory domain is found at Lys4–Glu117. At Asp53 the chain carries 4-aspartylphosphate. Positions Asn127–Gln227 form a DNA-binding region, ompR/PhoB-type.

Post-translationally, phosphorylated by KdpD. Phosphorylation is required for transcriptional activity.

Member of the two-component regulatory system KdpD/KdpE that regulates the transcription of a series of virulence factors through sensing external K(+) concentrations. Also regulates capsular polysaccharide synthesis. Upon phosphorylation by KpdD, functions as a transcriptional regulator by direct binding to promoter regions of target genes including spa, hla, aur and geh. Represses the transcription of kdpFABC operon. This chain is Transcriptional regulatory protein KdpE, found in Staphylococcus aureus (strain NCTC 8325 / PS 47).